A 131-amino-acid polypeptide reads, in one-letter code: Small ribosomal subunit protein uS8 (131 aa).

The protein belongs to the universal ribosomal protein uS8 family. As to quaternary structure, part of the 30S ribosomal subunit. Contacts proteins S5 and S12.

Its function is as follows. One of the primary rRNA binding proteins, it binds directly to 16S rRNA central domain where it helps coordinate assembly of the platform of the 30S subunit. This chain is Small ribosomal subunit protein uS8, found in Phocaeicola vulgatus (strain ATCC 8482 / DSM 1447 / JCM 5826 / CCUG 4940 / NBRC 14291 / NCTC 11154) (Bacteroides vulgatus).